The following is a 163-amino-acid chain: 3-isopropylmalate dehydratase small subunit (163 aa).

Belongs to the LeuD family. LeuD type 2 subfamily. As to quaternary structure, heterodimer of LeuC and LeuD.

The enzyme catalyses (2R,3S)-3-isopropylmalate = (2S)-2-isopropylmalate. Its pathway is amino-acid biosynthesis; L-leucine biosynthesis; L-leucine from 3-methyl-2-oxobutanoate: step 2/4. Catalyzes the isomerization between 2-isopropylmalate and 3-isopropylmalate, via the formation of 2-isopropylmaleate. The protein is 3-isopropylmalate dehydratase small subunit of Ruminiclostridium cellulolyticum (strain ATCC 35319 / DSM 5812 / JCM 6584 / H10) (Clostridium cellulolyticum).